The chain runs to 183 residues: Negative modulator of initiation of replication (183 aa).

An interaction with DNA region spans residues 118 to 122 (RTRIY).

Belongs to the SeqA family. Homodimer. Polymerizes to form helical filaments.

It localises to the cytoplasm. In terms of biological role, negative regulator of replication initiation, which contributes to regulation of DNA replication and ensures that replication initiation occurs exactly once per chromosome per cell cycle. Binds to pairs of hemimethylated GATC sequences in the oriC region, thus preventing assembly of replication proteins and re-initiation at newly replicated origins. Repression is relieved when the region becomes fully methylated. In Proteus mirabilis (strain HI4320), this protein is Negative modulator of initiation of replication.